We begin with the raw amino-acid sequence, 257 residues long: 3-deoxy-manno-octulosonate cytidylyltransferase (257 aa).

Belongs to the KdsB family.

The protein localises to the cytoplasm. The catalysed reaction is 3-deoxy-alpha-D-manno-oct-2-ulosonate + CTP = CMP-3-deoxy-beta-D-manno-octulosonate + diphosphate. It participates in nucleotide-sugar biosynthesis; CMP-3-deoxy-D-manno-octulosonate biosynthesis; CMP-3-deoxy-D-manno-octulosonate from 3-deoxy-D-manno-octulosonate and CTP: step 1/1. The protein operates within bacterial outer membrane biogenesis; lipopolysaccharide biosynthesis. Its function is as follows. Activates KDO (a required 8-carbon sugar) for incorporation into bacterial lipopolysaccharide in Gram-negative bacteria. The polypeptide is 3-deoxy-manno-octulosonate cytidylyltransferase (Rhodospirillum centenum (strain ATCC 51521 / SW)).